The following is an 850-amino-acid chain: Bifunctional uridylyltransferase/uridylyl-removing enzyme (850 aa).

The uridylyltransferase stretch occupies residues 1–317 (MSARPFADLR…LFPVVAPPLP (317 aa)). The interval 318–673 (IDDDFQLRAG…ARLSPAGEGI (356 aa)) is uridylyl-removing. The HD domain occupies 436–558 (VDEHILTVLR…VGDTRRLDAL (123 aa)). ACT domains are found at residues 674–755 (QVMV…AVQP) and 783–850 (VLSI…GVLG).

The protein belongs to the GlnD family. Mg(2+) is required as a cofactor.

The enzyme catalyses [protein-PII]-L-tyrosine + UTP = [protein-PII]-uridylyl-L-tyrosine + diphosphate. It catalyses the reaction [protein-PII]-uridylyl-L-tyrosine + H2O = [protein-PII]-L-tyrosine + UMP + H(+). With respect to regulation, uridylyltransferase (UTase) activity is inhibited by glutamine, while glutamine activates uridylyl-removing (UR) activity. Functionally, modifies, by uridylylation and deuridylylation, the PII regulatory proteins (GlnB and homologs), in response to the nitrogen status of the cell that GlnD senses through the glutamine level. Under low glutamine levels, catalyzes the conversion of the PII proteins and UTP to PII-UMP and PPi, while under higher glutamine levels, GlnD hydrolyzes PII-UMP to PII and UMP (deuridylylation). Thus, controls uridylylation state and activity of the PII proteins, and plays an important role in the regulation of nitrogen assimilation and metabolism. The chain is Bifunctional uridylyltransferase/uridylyl-removing enzyme from Thiobacillus denitrificans (strain ATCC 25259 / T1).